Consider the following 365-residue polypeptide: Peptide chain release factor 2 (365 aa).

Q251 is modified (N5-methylglutamine).

It belongs to the prokaryotic/mitochondrial release factor family. Methylated by PrmC. Methylation increases the termination efficiency of RF2.

The protein resides in the cytoplasm. In terms of biological role, peptide chain release factor 2 directs the termination of translation in response to the peptide chain termination codons UGA and UAA. This chain is Peptide chain release factor 2, found in Aliarcobacter butzleri (strain RM4018) (Arcobacter butzleri).